The following is a 143-amino-acid chain: Spliceosomal protein DIB1 (143 aa).

This sequence belongs to the DIM1 family. As to quaternary structure, component of the 25S [U4/U6.U5] tri-snRNP.

The protein resides in the nucleus. In terms of biological role, essential role in pre-mRNA splicing. Also essential for entry into mitosis (G2/M progression) as well as for chromosome segregation during mitosis. In Eremothecium gossypii (strain ATCC 10895 / CBS 109.51 / FGSC 9923 / NRRL Y-1056) (Yeast), this protein is Spliceosomal protein DIB1 (DIB1).